The following is a 372-amino-acid chain: Glutamate 5-kinase (372 aa).

Lys9 is a binding site for ATP. Positions 49, 136, and 148 each coordinate substrate. Residues 168–169 (TD) and 210–216 (TGGMKSK) contribute to the ATP site. The PUA domain maps to 276-353 (AGSIEIDSGA…EEALSLTKRS (78 aa)).

This sequence belongs to the glutamate 5-kinase family.

It is found in the cytoplasm. It carries out the reaction L-glutamate + ATP = L-glutamyl 5-phosphate + ADP. It participates in amino-acid biosynthesis; L-proline biosynthesis; L-glutamate 5-semialdehyde from L-glutamate: step 1/2. Functionally, catalyzes the transfer of a phosphate group to glutamate to form L-glutamate 5-phosphate. The chain is Glutamate 5-kinase from Shouchella clausii (strain KSM-K16) (Alkalihalobacillus clausii).